Consider the following 37-residue polypeptide: Large ribosomal subunit protein bL36 (37 aa).

It belongs to the bacterial ribosomal protein bL36 family.

This chain is Large ribosomal subunit protein bL36, found in Sulfurimonas denitrificans (strain ATCC 33889 / DSM 1251) (Thiomicrospira denitrificans (strain ATCC 33889 / DSM 1251)).